We begin with the raw amino-acid sequence, 314 residues long: ATP synthase gamma chain (314 aa).

The protein belongs to the ATPase gamma chain family. F-type ATPases have 2 components, CF(1) - the catalytic core - and CF(0) - the membrane proton channel. CF(1) has five subunits: alpha(3), beta(3), gamma(1), delta(1), epsilon(1). CF(0) has three main subunits: a, b and c.

The protein localises to the cell inner membrane. Produces ATP from ADP in the presence of a proton gradient across the membrane. The gamma chain is believed to be important in regulating ATPase activity and the flow of protons through the CF(0) complex. This Gloeobacter violaceus (strain ATCC 29082 / PCC 7421) protein is ATP synthase gamma chain.